The chain runs to 287 residues: tRNA pseudouridine synthase B (287 aa).

Asp-38 functions as the Nucleophile in the catalytic mechanism.

It belongs to the pseudouridine synthase TruB family. Type 1 subfamily.

The catalysed reaction is uridine(55) in tRNA = pseudouridine(55) in tRNA. In terms of biological role, responsible for synthesis of pseudouridine from uracil-55 in the psi GC loop of transfer RNAs. The sequence is that of tRNA pseudouridine synthase B from Mycoplasma mobile (strain ATCC 43663 / 163K / NCTC 11711) (Mesomycoplasma mobile).